We begin with the raw amino-acid sequence, 364 residues long: Variable large protein 21 (364 aa).

The N-terminal stretch at 1–26 is a signal peptide; sequence MRKRISAIINKLNISIMMMIVVLMIG. The N-palmitoyl cysteine moiety is linked to residue Cys-27. Cys-27 is lipidated: S-diacylglycerol cysteine.

Belongs to the variable large protein (Vlp) family. Alpha subfamily.

The protein localises to the cell outer membrane. Functionally, the Vlp and Vsp proteins are antigenically distinct proteins, only one vlp or vsp gene is transcriptionally active at any one time. Switching between these genes is a mechanism of host immune response evasion. The protein is Variable large protein 21 of Borrelia hermsii.